The primary structure comprises 96 residues: Prokineticin Bm8-a (96 aa).

The signal sequence occupies residues 1–19; that stretch reads MKCFAQIVVLLLVIAFSHG. 5 disulfides stabilise this stretch: cysteine 26/cysteine 38, cysteine 32/cysteine 50, cysteine 37/cysteine 78, cysteine 60/cysteine 86, and cysteine 80/cysteine 95.

It belongs to the AVIT (prokineticin) family. Expressed by the skin glands.

Its subcellular location is the secreted. In terms of biological role, potent agonist for both PKR1/PROKR1 and PKR2/PROKR2, and inducer of a potent and long-lasting hyperalgesia. Also potentiates capsaicin-induced TRPV1 current, when tested on DRG neurons. At subnanomolar concentrations, this protein both induces potent chemotaxis of macrophages and stimulates LPS-induced production of the pro-inflammatory cytokines IL-1 and IL-12. In vivo, potently stimulates the contraction of the guinea-pig gastrointestinal (GI) smooth muscle (nanomolar concentration). The polypeptide is Prokineticin Bm8-a (Bombina maxima (Giant fire-bellied toad)).